A 185-amino-acid polypeptide reads, in one-letter code: Hypoxanthine/guanine phosphoribosyltransferase (185 aa).

It belongs to the purine/pyrimidine phosphoribosyltransferase family. Archaeal HPRT subfamily. In terms of assembly, homodimer.

The protein localises to the cytoplasm. It carries out the reaction IMP + diphosphate = hypoxanthine + 5-phospho-alpha-D-ribose 1-diphosphate. The catalysed reaction is GMP + diphosphate = guanine + 5-phospho-alpha-D-ribose 1-diphosphate. It functions in the pathway purine metabolism; IMP biosynthesis via salvage pathway; IMP from hypoxanthine: step 1/1. In terms of biological role, catalyzes a salvage reaction resulting in the formation of IMP that is energically less costly than de novo synthesis. The sequence is that of Hypoxanthine/guanine phosphoribosyltransferase (hpt) from Methanococcus maripaludis (strain DSM 14266 / JCM 13030 / NBRC 101832 / S2 / LL).